Consider the following 499-residue polypeptide: Bifunctional purine biosynthesis protein PurH (499 aa).

The MGS-like domain occupies 1-144 (MIKRALISVF…KNFQDVVVLT (144 aa)).

The protein belongs to the PurH family.

The enzyme catalyses (6R)-10-formyltetrahydrofolate + 5-amino-1-(5-phospho-beta-D-ribosyl)imidazole-4-carboxamide = 5-formamido-1-(5-phospho-D-ribosyl)imidazole-4-carboxamide + (6S)-5,6,7,8-tetrahydrofolate. It carries out the reaction IMP + H2O = 5-formamido-1-(5-phospho-D-ribosyl)imidazole-4-carboxamide. It functions in the pathway purine metabolism; IMP biosynthesis via de novo pathway; 5-formamido-1-(5-phospho-D-ribosyl)imidazole-4-carboxamide from 5-amino-1-(5-phospho-D-ribosyl)imidazole-4-carboxamide (10-formyl THF route): step 1/1. Its pathway is purine metabolism; IMP biosynthesis via de novo pathway; IMP from 5-formamido-1-(5-phospho-D-ribosyl)imidazole-4-carboxamide: step 1/1. The protein is Bifunctional purine biosynthesis protein PurH of Clostridium acetobutylicum (strain ATCC 824 / DSM 792 / JCM 1419 / IAM 19013 / LMG 5710 / NBRC 13948 / NRRL B-527 / VKM B-1787 / 2291 / W).